The primary structure comprises 242 residues: MCWNYQVSLIFSVIYVVTNSYYVVKRPLYWKQYLLFGSFYLTMEVFQTLQWLFGNVYSDSMYGQSVCNSINVNYTIVAFILIWLQPILFSVIGYQTTTTNKWFFRVLTVLNCFVFFYGLKLLYGGFEKPDYYTISDSMFGSSTCTNEGETGHLVWRFKPKTLDVFPNHLTYIILCIISFVMYENNATRVIGLGWLLSLIVTKLLLAPTLVEIASSWCLLSIIANLLIVAYVHISTGIYLTGQ.

The next 2 membrane-spanning stretches (helical) occupy residues 4-24 (NYQV…YYVV) and 34-54 (LLFG…WLFG). Residue Asn-73 is glycosylated (N-linked (GlcNAc...) asparagine; by host). 3 helical membrane-spanning segments follow: residues 74 to 94 (YTIV…VIGY), 106 to 126 (VLTV…YGGF), and 162 to 182 (LDVF…FVMY). Asn-185 is a glycosylation site (N-linked (GlcNAc...) asparagine; by host). The next 2 helical transmembrane spans lie at 189 to 209 (VIGL…APTL) and 217 to 237 (CLLS…STGI).

Its subcellular location is the membrane. This is an uncharacterized protein from Acanthamoeba polyphaga mimivirus (APMV).